Consider the following 349-residue polypeptide: Phenylalanine--tRNA ligase alpha subunit (349 aa).

Residue Glu-259 participates in Mg(2+) binding.

This sequence belongs to the class-II aminoacyl-tRNA synthetase family. Phe-tRNA synthetase alpha subunit type 1 subfamily. In terms of assembly, tetramer of two alpha and two beta subunits. Requires Mg(2+) as cofactor.

Its subcellular location is the cytoplasm. The catalysed reaction is tRNA(Phe) + L-phenylalanine + ATP = L-phenylalanyl-tRNA(Phe) + AMP + diphosphate + H(+). The chain is Phenylalanine--tRNA ligase alpha subunit from Lactobacillus gasseri (strain ATCC 33323 / DSM 20243 / BCRC 14619 / CIP 102991 / JCM 1131 / KCTC 3163 / NCIMB 11718 / NCTC 13722 / AM63).